The following is a 207-amino-acid chain: Outer-membrane lipoprotein LolB (207 aa).

An N-terminal signal peptide occupies residues 1 to 23; the sequence is MPTMNRSRRLALLCLGAPLLLAA. Residue C24 is the site of N-palmitoyl cysteine attachment. A lipid anchor (S-diacylglycerol cysteine) is attached at C24. The disordered stretch occupies residues 171–207; it reads PSASQAPAPRPRRIDLEREGGPTPLAVKLVIDPEEAP.

Belongs to the LolB family. As to quaternary structure, monomer.

It is found in the cell outer membrane. Functionally, plays a critical role in the incorporation of lipoproteins in the outer membrane after they are released by the LolA protein. The polypeptide is Outer-membrane lipoprotein LolB (Cupriavidus pinatubonensis (strain JMP 134 / LMG 1197) (Cupriavidus necator (strain JMP 134))).